The chain runs to 238 residues: Small ribosomal subunit protein uS2 (238 aa).

The protein belongs to the universal ribosomal protein uS2 family.

The protein is Small ribosomal subunit protein uS2 of Actinobacillus pleuropneumoniae serotype 5b (strain L20).